Here is a 321-residue protein sequence, read N- to C-terminus: Glutaminase (321 aa).

Substrate-binding residues include Ser69, Asn120, Glu165, Asn172, Tyr196, Tyr248, and Val266.

The protein belongs to the glutaminase family. As to quaternary structure, homotetramer.

The catalysed reaction is L-glutamine + H2O = L-glutamate + NH4(+). This chain is Glutaminase, found in Bacteroides fragilis (strain YCH46).